The sequence spans 115 residues: NAD(P)H-quinone oxidoreductase subunit M (115 aa).

It belongs to the complex I NdhM subunit family. As to quaternary structure, NDH-1 can be composed of about 15 different subunits; different subcomplexes with different compositions have been identified which probably have different functions.

It is found in the cellular thylakoid membrane. It catalyses the reaction a plastoquinone + NADH + (n+1) H(+)(in) = a plastoquinol + NAD(+) + n H(+)(out). The catalysed reaction is a plastoquinone + NADPH + (n+1) H(+)(in) = a plastoquinol + NADP(+) + n H(+)(out). NDH-1 shuttles electrons from an unknown electron donor, via FMN and iron-sulfur (Fe-S) centers, to quinones in the respiratory and/or the photosynthetic chain. The immediate electron acceptor for the enzyme in this species is believed to be plastoquinone. Couples the redox reaction to proton translocation, and thus conserves the redox energy in a proton gradient. Cyanobacterial NDH-1 also plays a role in inorganic carbon-concentration. This is NAD(P)H-quinone oxidoreductase subunit M from Prochlorococcus marinus (strain MIT 9211).